The sequence spans 336 residues: tRNA N6-adenosine threonylcarbamoyltransferase (336 aa).

Residues histidine 114 and histidine 118 each contribute to the Fe cation site. Substrate contacts are provided by residues 136–140, aspartate 169, glycine 182, aspartate 186, and asparagine 275; that span reads LVSGG. Position 301 (aspartate 301) interacts with Fe cation.

This sequence belongs to the KAE1 / TsaD family. Fe(2+) serves as cofactor.

The protein localises to the cytoplasm. It carries out the reaction L-threonylcarbamoyladenylate + adenosine(37) in tRNA = N(6)-L-threonylcarbamoyladenosine(37) in tRNA + AMP + H(+). Required for the formation of a threonylcarbamoyl group on adenosine at position 37 (t(6)A37) in tRNAs that read codons beginning with adenine. Is involved in the transfer of the threonylcarbamoyl moiety of threonylcarbamoyl-AMP (TC-AMP) to the N6 group of A37, together with TsaE and TsaB. TsaD likely plays a direct catalytic role in this reaction. This chain is tRNA N6-adenosine threonylcarbamoyltransferase, found in Streptococcus pneumoniae (strain Taiwan19F-14).